We begin with the raw amino-acid sequence, 146 residues long: Large ribosomal subunit protein uL15 (146 aa).

The disordered stretch occupies residues 1–58 (MKLNELSPPKGARTARKRKGRGPGSGLGKTAGKGHKGQKARSGGGVRPGFEGGQMPVH). 2 stretches are compositionally biased toward gly residues: residues 22-31 (GPGSGLGKTA) and 42-52 (SGGGVRPGFEG).

The protein belongs to the universal ribosomal protein uL15 family. As to quaternary structure, part of the 50S ribosomal subunit.

In terms of biological role, binds to the 23S rRNA. This chain is Large ribosomal subunit protein uL15, found in Desulfatibacillum aliphaticivorans.